Reading from the N-terminus, the 150-residue chain is Ribosome maturation factor RimP (150 aa).

This sequence belongs to the RimP family.

The protein localises to the cytoplasm. Required for maturation of 30S ribosomal subunits. The chain is Ribosome maturation factor RimP from Thermotoga neapolitana (strain ATCC 49049 / DSM 4359 / NBRC 107923 / NS-E).